The following is a 336-amino-acid chain: Dihydrolipoyl dehydrogenase (336 aa).

FAD is bound by residues 34–42 (EKEVVGGIC), K51, and G115. C42 and C47 are oxidised to a cystine. NAD(+) contacts are provided by residues 180–184 (GGGVI), E203, V237, and 264–267 (SVGT). Positions 304 and 312 each coordinate FAD.

The protein belongs to the class-I pyridine nucleotide-disulfide oxidoreductase family. In terms of assembly, homodimer. The cofactor is FAD.

It localises to the cytoplasm. The catalysed reaction is N(6)-[(R)-dihydrolipoyl]-L-lysyl-[protein] + NAD(+) = N(6)-[(R)-lipoyl]-L-lysyl-[protein] + NADH + H(+). In terms of biological role, lipoamide dehydrogenase is a component of the alpha-ketoacid dehydrogenase complexes. The protein is Dihydrolipoyl dehydrogenase (pdhD) of Acholeplasma laidlawii.